Here is a 366-residue protein sequence, read N- to C-terminus: Ferredoxin--NADP reductase, leaf isozyme 2, chloroplastic (366 aa).

The transit peptide at 1-48 (MAAVNTVSSLPCSKAGAAVAGGAPRPSTCSVFYPPRCWSKRSSGNGVR) directs the protein to the chloroplast. In terms of domain architecture, FAD-binding FR-type spans 87 to 209 (KEPYTGRCLL…TGPVGKEMLM (123 aa)). FAD is bound by residues 145–148 (RLYS), 166–168 (CVK), Y172, and 183–185 (VCS). NADP(+)-binding residues include S148 and K168. Residues C184 and C189 are joined by a disulfide bond. At S185 the chain carries Phosphoserine. T216 is subject to Phosphothreonine. Residue T224 participates in FAD binding. Residues T224, 256–257 (VP), 286–287 (SR), K296, 325–326 (GL), and E364 contribute to the NADP(+) site.

The protein belongs to the ferredoxin--NADP reductase type 1 family. Heterodimer with LFNR1. Component of high molecular weight thylakoid LFNRs-containing protein complexes containing LIR1, LFNR1, LFNR2, TIC62 and TROL proteins. Interacts directly with LFNR1 and LFNR2; LIR1 increases the affinity of LFNR1 and LFNR2 for TIC62 and subsequent thylakoid relocalization. FAD is required as a cofactor. In terms of processing, may form interchain disulfide bonds with LIR1.

It localises to the plastid. Its subcellular location is the chloroplast stroma. The protein resides in the chloroplast thylakoid membrane. The enzyme catalyses 2 reduced [2Fe-2S]-[ferredoxin] + NADP(+) + H(+) = 2 oxidized [2Fe-2S]-[ferredoxin] + NADPH. It functions in the pathway energy metabolism; photosynthesis. Functionally, plays a key role in regulating the relative amounts of cyclic and non-cyclic electron flow to meet the demands of the plant for ATP and reducing power. The sequence is that of Ferredoxin--NADP reductase, leaf isozyme 2, chloroplastic from Oryza sativa subsp. indica (Rice).